We begin with the raw amino-acid sequence, 170 residues long: Putative invertase inhibitor (170 aa).

A signal peptide spans M1–S14. 2 disulfides stabilise this stretch: C22–C37 and C93–C133.

Belongs to the PMEI family. Expressed in pollen (at protein level). Expressed in pollen.

The sequence is that of Putative invertase inhibitor from Platanus orientalis (Oriental plane-tree).